The primary structure comprises 378 residues: Acetylornithine deacetylase (378 aa).

Zn(2+) is bound at residue histidine 76. Aspartate 78 is an active-site residue. Residue aspartate 108 participates in Zn(2+) binding. The active site involves glutamate 140. Residues glutamate 141, glutamate 165, and histidine 351 each contribute to the Zn(2+) site.

Belongs to the peptidase M20A family. ArgE subfamily. As to quaternary structure, homodimer. Requires Zn(2+) as cofactor. Co(2+) is required as a cofactor. Glutathione serves as cofactor.

Its subcellular location is the cytoplasm. The enzyme catalyses N(2)-acetyl-L-ornithine + H2O = L-ornithine + acetate. The protein operates within amino-acid biosynthesis; L-arginine biosynthesis; L-ornithine from N(2)-acetyl-L-ornithine (linear): step 1/1. Its function is as follows. Catalyzes the hydrolysis of the amide bond of N(2)-acetylated L-amino acids. Cleaves the acetyl group from N-acetyl-L-ornithine to form L-ornithine, an intermediate in L-arginine biosynthesis pathway, and a branchpoint in the synthesis of polyamines. The sequence is that of Acetylornithine deacetylase from Vibrio vulnificus (strain CMCP6).